Consider the following 216-residue polypeptide: Protein-L-isoaspartate O-methyltransferase (216 aa).

Ser-61 is a catalytic residue.

The protein belongs to the methyltransferase superfamily. L-isoaspartyl/D-aspartyl protein methyltransferase family.

It localises to the cytoplasm. The enzyme catalyses [protein]-L-isoaspartate + S-adenosyl-L-methionine = [protein]-L-isoaspartate alpha-methyl ester + S-adenosyl-L-homocysteine. Functionally, catalyzes the methyl esterification of L-isoaspartyl residues in peptides and proteins that result from spontaneous decomposition of normal L-aspartyl and L-asparaginyl residues. It plays a role in the repair and/or degradation of damaged proteins. The chain is Protein-L-isoaspartate O-methyltransferase from Dinoroseobacter shibae (strain DSM 16493 / NCIMB 14021 / DFL 12).